An 84-amino-acid chain; its full sequence is Esculentin-1SIa (84 aa).

Residues 1-22 (MFTLKKPLLLIVLLGIISLSLC) form the signal peptide. A propeptide spans 23 to 36 (EQERAADEDEGSEI) (removed in mature form). A disulfide bond links C78 and C84.

Expressed by the skin glands.

The protein localises to the secreted. Has antimicrobial activity against Gram-negative bacterium E.coli ATCC 8739 (MIC=6.3 ug), against Gram positive bacteria S.aureus ATCC 6538 (MIC=3.1 ug), methicillin-resistant S.aureus ATCC 43300 (MIC=25 ug) and B.subtilis ATCC 6633 (MIC=25 ug). Has no activity against fungus C.albicans ATCC 90028. The sequence is that of Esculentin-1SIa from Odorrana ishikawae (Ishikawa's frog).